The following is a 386-amino-acid chain: Mannitol-1-phosphate 5-dehydrogenase (386 aa).

4-15 contributes to the NAD(+) binding site; it reads ALHFGAGNIGRG.

The protein belongs to the mannitol dehydrogenase family.

The enzyme catalyses D-mannitol 1-phosphate + NAD(+) = beta-D-fructose 6-phosphate + NADH + H(+). This Caldanaerobacter subterraneus subsp. tengcongensis (strain DSM 15242 / JCM 11007 / NBRC 100824 / MB4) (Thermoanaerobacter tengcongensis) protein is Mannitol-1-phosphate 5-dehydrogenase.